Here is a 122-residue protein sequence, read N- to C-terminus: S-adenosylmethionine decarboxylase proenzyme (122 aa).

The active-site Schiff-base intermediate with substrate; via pyruvic acid is the serine 63. Position 63 is a pyruvic acid (Ser); by autocatalysis (serine 63). Catalysis depends on histidine 68, which acts as the Proton acceptor; for processing activity. The active-site Proton donor; for catalytic activity is cysteine 83.

This sequence belongs to the prokaryotic AdoMetDC family. Type 1 subfamily. As to quaternary structure, heterotetramer of two alpha and two beta chains arranged as a dimer of alpha/beta heterodimers. Pyruvate serves as cofactor. Is synthesized initially as an inactive proenzyme. Formation of the active enzyme involves a self-maturation process in which the active site pyruvoyl group is generated from an internal serine residue via an autocatalytic post-translational modification. Two non-identical subunits are generated from the proenzyme in this reaction, and the pyruvate is formed at the N-terminus of the alpha chain, which is derived from the carboxyl end of the proenzyme. The post-translation cleavage follows an unusual pathway, termed non-hydrolytic serinolysis, in which the side chain hydroxyl group of the serine supplies its oxygen atom to form the C-terminus of the beta chain, while the remainder of the serine residue undergoes an oxidative deamination to produce ammonia and the pyruvoyl group blocking the N-terminus of the alpha chain.

It carries out the reaction S-adenosyl-L-methionine + H(+) = S-adenosyl 3-(methylsulfanyl)propylamine + CO2. Its pathway is amine and polyamine biosynthesis; S-adenosylmethioninamine biosynthesis; S-adenosylmethioninamine from S-adenosyl-L-methionine: step 1/1. Catalyzes the decarboxylation of S-adenosylmethionine to S-adenosylmethioninamine (dcAdoMet), the propylamine donor required for the synthesis of the polyamines spermine and spermidine from the diamine putrescine. This chain is S-adenosylmethionine decarboxylase proenzyme, found in Methanococcus maripaludis (strain DSM 14266 / JCM 13030 / NBRC 101832 / S2 / LL).